The chain runs to 240 residues: 5-oxoprolinase subunit B (240 aa).

194-201 (GWQLIGKT) is an ATP binding site.

It belongs to the PxpB family. In terms of assembly, forms a complex composed of PxpA, PxpB and PxpC. Interacts with PxpC (KipA). Interaction with PxpC prevents the inhibitory action of PxpB (KipI). Interacts with KinA. Two PxpB monomers bind via their C-domains at a conserved proline in the KinA dimerization and histidine-phosphotransfer (DHp) domain.

The catalysed reaction is 5-oxo-L-proline + ATP + 2 H2O = L-glutamate + ADP + phosphate + H(+). In terms of biological role, catalyzes the cleavage of 5-oxoproline to form L-glutamate coupled to the hydrolysis of ATP to ADP and inorganic phosphate. In addition, is a potent inhibitor of the autophosphorylation reaction of kinase A (kinA) and its reverse reaction, but does not inhibit phosphate transfer to the Spo0F response regulator once kinase A is phosphorylated. Is an inhibitor of the catalytic domain of kinase A affecting the ATP/ADP reactions and not the phosphotransferase functions of this domain. The inhibition is non-competitive with respect to ATP. In Bacillus subtilis (strain 168), this protein is 5-oxoprolinase subunit B.